The chain runs to 453 residues: MKRGIYAVLLVGVLIFSVVASGCIGGTQTQTETQTPEKTQTPTTTQPSPTTTTSPTQTTSQTPTETETHTQEAECGSGKVVIWHNMQPNELQVFQSLAEEYMAMCPDVEIVFEQKPDLENALKVAIPAGQGPDLFIWAHDWIGKFAEAGLLEPIDEYITDDLLQKFAPMAREAIEYKGHYYALPFAAETVAMIYNKKIVSEPPKTFDELKEVMEKYYDPNNEKYGIAWPINAYFISAIAQAFGGYYFDDKTEQPGLDKPETIEGFKFFFENIWPYMAPTADYNTQQSIFLEGRAPIMVNGPWSIGSVKDAGIDFGVAPLPPIIKDGKEYWPRPYGGVKLIYFAAGTHNKDAAWKFVKWFTTNPEVIKQLALDLGYIPVLSEVLNDPEIKNDPVIYGFGQAVQHAYLMPKSPKMGAVWGGVQGAIDEILKDPKHADIEAILKKYQEEILKNMQG.

The first 29 residues, 1-29 (MKRGIYAVLLVGVLIFSVVASGCIGGTQT), serve as a signal peptide directing secretion. A compositionally biased stretch (low complexity) spans 27–65 (TQTQTETQTPEKTQTPTTTQPSPTTTTSPTQTTSQTPTE). Residues 27–73 (TQTQTETQTPEKTQTPTTTQPSPTTTTSPTQTTSQTPTETETHTQEA) form a disordered region.

It belongs to the bacterial solute-binding protein 1 family.

In terms of biological role, involved in an abc transport system for maltotriose. The sequence is that of Maltotriose-binding protein (malE) from Pyrococcus abyssi (strain GE5 / Orsay).